The following is a 376-amino-acid chain: Homeobox protein extradenticle (376 aa).

The interval 16-35 (APQGYSLSGQDDGQNTGNEN) is disordered. Residues 20-34 (YSLSGQDDGQNTGNE) are compositionally biased toward polar residues. A PBC domain is found at 38–237 (RKQKDIGEIL…VMILRSRFLD (200 aa)). Residues 45–124 (EILQQIMSIS…EGVAGPEKGG (80 aa)) form a PBC-A region. Residues 127-237 (AAAASAAAAS…VMILRSRFLD (111 aa)) form a PBC-B region. The homeobox; TALE-type DNA-binding region spans 238-300 (ARRKRRNFSK…NKRIRYKKNI (63 aa)). The span at 318–335 (ASPYSMAGPPSGTTTPMM) shows a compositional bias: low complexity. The disordered stretch occupies residues 318–376 (ASPYSMAGPPSGTTTPMMSPAPPQDSMGYTMGSGGYDQQQPYDNSMGGYDPNLHQDLSP).

This sequence belongs to the TALE/PBX homeobox family. In terms of assembly, interacts with Ubx and hth.

The protein resides in the nucleus. Functionally, transcription factor which acts with the selector homeodomain proteins altering the regulation of downstream target genes such as wingless (wg), teashirt (tsh) and decapentaplegic (dpp), thus affecting segmental identity. Delimits the eye field and prevent inappropriate eye development. Required for proper localization of chordotonal organs within the peripheral nervous system. This Drosophila pseudoobscura pseudoobscura (Fruit fly) protein is Homeobox protein extradenticle.